The following is a 141-amino-acid chain: Hemoglobin subunit alpha (141 aa).

In terms of domain architecture, Globin spans V1–R141. Position 3 is a phosphoserine (S3). K7 is modified (N6-succinyllysine). A Phosphothreonine modification is found at T8. N6-succinyllysine is present on K11. K16 carries the N6-acetyllysine; alternate modification. K16 is modified (N6-succinyllysine; alternate). A Phosphotyrosine modification is found at Y24. S35 bears the Phosphoserine mark. K40 carries the post-translational modification N6-succinyllysine. H58 contacts O2. A heme b-binding site is contributed by H87. Phosphoserine is present on S102. T108 carries the phosphothreonine modification. S124 carries the phosphoserine modification. Phosphothreonine occurs at positions 134 and 137. S138 bears the Phosphoserine mark.

This sequence belongs to the globin family. Heterotetramer of two alpha chains and two beta chains. In terms of tissue distribution, red blood cells.

Its function is as follows. Involved in oxygen transport from the lung to the various peripheral tissues. Hemopressin acts as an antagonist peptide of the cannabinoid receptor CNR1. Hemopressin-binding efficiently blocks cannabinoid receptor CNR1 and subsequent signaling. The protein is Hemoglobin subunit alpha (HBA) of Loxodonta africana (African elephant).